The sequence spans 351 residues: MIRIIGIGPARDDITIRALRALEDSDVVIGYARYIRQIEDLLDGKEVIRSGMGDEIERVELAIEKHREGLDVALVSSGDPGVYGMANVFFQIFDKYSGIEFEVIPGVTAVNYAASKLGAPLHDFAVISLSDILTPLSEIMAKIRAAAESGMIIALYNPLGKRRKRPFREAVEILRSLLPPQTPVGIVRTVDGAPDVRIVDLESLDESLVDMSTIVLVGNVTTYTRDGQMITPRGYAVETPLHELAREFYEENPLGKASGPDENCEFYPCHFEGQNCAFCYCPFYPCAEGSTGGRWIRDRGVWSCQDCTWIHTDSAVECVKRSLGDIISGPDDLMDKKRELLKLRRECLMRG.

This sequence belongs to the precorrin methyltransferase family.

It carries out the reaction Co(II)-factor III + S-adenosyl-L-methionine + H(+) = Co(II)-factor IV + S-adenosyl-L-homocysteine. It functions in the pathway cofactor biosynthesis; adenosylcobalamin biosynthesis; cob(II)yrinate a,c-diamide from sirohydrochlorin (anaerobic route): step 3/10. Methyltransferase that likely catalyzes the ring contraction and methylation of C-17 in cobalt-factor III to form cobalt-factor IV. May also convert cobalt-precorrin-3 to cobalt-precorrin-4. The polypeptide is Probable cobalt-factor III C(17)-methyltransferase (cbiH) (Methanothermobacter thermautotrophicus (strain ATCC 29096 / DSM 1053 / JCM 10044 / NBRC 100330 / Delta H) (Methanobacterium thermoautotrophicum)).